A 476-amino-acid chain; its full sequence is Lactate utilization protein B (476 aa).

2 consecutive 4Fe-4S ferredoxin-type domains span residues 304–334 (GTEFQPVLQCIRCAACVNVCPVYRHIGGHSY) and 353–382 (YDDYKELPYASSLCAACTEVCPVKIPLHEL). 7 residues coordinate [4Fe-4S] cluster: C313, C316, C319, C323, C366, C369, and C373.

This sequence belongs to the LutB/YkgF family.

In terms of biological role, is involved in L-lactate degradation and allows cells to grow with lactate as the sole carbon source. Has probably a role as an electron transporter during oxidation of L-lactate. This chain is Lactate utilization protein B, found in Geobacillus thermodenitrificans (strain NG80-2).